A 360-amino-acid chain; its full sequence is Probable butyrate kinase (360 aa).

It belongs to the acetokinase family.

The protein resides in the cytoplasm. The catalysed reaction is butanoate + ATP = butanoyl phosphate + ADP. In Enterococcus faecalis (strain ATCC 700802 / V583), this protein is Probable butyrate kinase.